A 704-amino-acid chain; its full sequence is Elongation factor G (704 aa).

The 284-residue stretch at 8 to 291 (DKVRNIGIMA…AVVDYLASPL (284 aa)) folds into the tr-type G domain. GTP-binding positions include 17-24 (AHIDAGKT), 90-94 (DTPGH), and 144-147 (NKMD).

Belongs to the TRAFAC class translation factor GTPase superfamily. Classic translation factor GTPase family. EF-G/EF-2 subfamily.

The protein localises to the cytoplasm. In terms of biological role, catalyzes the GTP-dependent ribosomal translocation step during translation elongation. During this step, the ribosome changes from the pre-translocational (PRE) to the post-translocational (POST) state as the newly formed A-site-bound peptidyl-tRNA and P-site-bound deacylated tRNA move to the P and E sites, respectively. Catalyzes the coordinated movement of the two tRNA molecules, the mRNA and conformational changes in the ribosome. The chain is Elongation factor G from Chlorobium phaeovibrioides (strain DSM 265 / 1930) (Prosthecochloris vibrioformis (strain DSM 265)).